We begin with the raw amino-acid sequence, 255 residues long: Zinc import ATP-binding protein ZnuC (255 aa).

The ABC transporter domain occupies 4-219 (VDVDGLSLRY…PEYRALFGTG (216 aa)). Residue 36-43 (GPNGSGKT) participates in ATP binding. A disordered region spans residues 234–255 (EHDHHDGCAHGQATEDRTEAAE).

This sequence belongs to the ABC transporter superfamily. Zinc importer (TC 3.A.1.15.5) family. In terms of assembly, the complex is composed of two ATP-binding proteins (ZnuC), two transmembrane proteins (ZnuB) and a solute-binding protein (ZnuA).

Its subcellular location is the cell inner membrane. The enzyme catalyses Zn(2+)(out) + ATP(in) + H2O(in) = Zn(2+)(in) + ADP(in) + phosphate(in) + H(+)(in). Its function is as follows. Part of the ABC transporter complex ZnuABC involved in zinc import. Responsible for energy coupling to the transport system. The chain is Zinc import ATP-binding protein ZnuC from Roseobacter denitrificans (strain ATCC 33942 / OCh 114) (Erythrobacter sp. (strain OCh 114)).